Consider the following 941-residue polypeptide: Probable lipoxygenase 8, chloroplastic (941 aa).

Disordered regions lie at residues 1–22 (MLRP…SSSS) and 45–68 (LIAG…VVRC). A chloroplast-targeting transit peptide spans 1–67 (MLRPQLNPSS…QQGRQRVVVR (67 aa)). Positions 100–236 (AVATIKVTVE…SIDEGTPGKR (137 aa)) constitute a PLAT domain. The Lipoxygenase domain maps to 242-941 (AYLPGQTPAG…GMGIPNSTSI (700 aa)). 2 disordered regions span residues 255–274 (YREE…READ) and 288–331 (NPDS…RKGN). The span at 319-331 (SKKDPKSETRKGN) shows a compositional bias: basic and acidic residues. Fe cation contacts are provided by H598, H603, H790, N794, and I941.

It belongs to the lipoxygenase family. The cofactor is Fe cation.

Its subcellular location is the plastid. The protein localises to the chloroplast. The catalysed reaction is (9Z,12Z)-octadecadienoate + O2 = (13S)-hydroperoxy-(9Z,11E)-octadecadienoate. The enzyme catalyses (9Z,12Z,15Z)-octadecatrienoate + O2 = (13S)-hydroperoxy-(9Z,11E,15Z)-octadecatrienoate. It participates in lipid metabolism; oxylipin biosynthesis. Plant lipoxygenase may be involved in a number of diverse aspects of plant physiology including growth and development, pest resistance, and senescence or responses to wounding. It catalyzes the hydroperoxidation of lipids containing a cis,cis-1,4-pentadiene structure. In Oryza sativa subsp. japonica (Rice), this protein is Probable lipoxygenase 8, chloroplastic (CM-LOX2).